We begin with the raw amino-acid sequence, 156 residues long: MTELKLIHIFTDGSCLGNPGPGGYGIVMNYKGHTKEMSDGFALTTNNRMELLAPIIALESLKEPCQVVLTSDSQYMRQGIMTWIHGWKKKGWMTSNRTPVKNVDLWKRLDKASQMHTIDWQWVKGHAGHAENERCDVLARTAAESKPTQPDLGYQP.

Residues 3 to 144 (ELKLIHIFTD…CDVLARTAAE (142 aa)) form the RNase H type-1 domain. Mg(2+) is bound by residues D12, E50, D72, and D136.

The protein belongs to the RNase H family. Monomer. The cofactor is Mg(2+).

It is found in the cytoplasm. The enzyme catalyses Endonucleolytic cleavage to 5'-phosphomonoester.. In terms of biological role, endonuclease that specifically degrades the RNA of RNA-DNA hybrids. The chain is Ribonuclease H from Shewanella baltica (strain OS223).